The chain runs to 775 residues: Glutamine--tRNA ligase (775 aa).

N-acetylalanine is present on Ala2. Ser70 is modified (phosphoserine). ATP contacts are provided by residues 271 to 273 (EPN) and 277 to 283 (HIGHAKA). Asp303 contributes to the L-glutamine binding site. Lys309 carries the N6-acetyllysine modification. An L-glutamine-binding site is contributed by Tyr438. ATP is bound by residues Thr457, 486–487 (RL), and 494–496 (VSK). Ser495 carries the post-translational modification Phosphoserine.

This sequence belongs to the class-I aminoacyl-tRNA synthetase family. In terms of assembly, monomer. Part of a multisubunit complex that groups tRNA ligases for Arg (RARS1), Asp (DARS1), Gln (QARS1), Ile (IARS1), Leu (LARS1), Lys (KARS1), Met (MARS1) the bifunctional ligase for Glu and Pro (EPRS1) and the auxiliary subunits AIMP1/p43, AIMP2/p38 and EEF1E1/p18. Interacts with RARS1. Part of a complex composed of RARS1, QARS1 and AIMP1.

Its subcellular location is the cytoplasm. It localises to the cytosol. The enzyme catalyses tRNA(Gln) + L-glutamine + ATP = L-glutaminyl-tRNA(Gln) + AMP + diphosphate. Its function is as follows. Glutamine--tRNA ligase. Plays a critical role in brain development. The sequence is that of Glutamine--tRNA ligase (Qars1) from Mus musculus (Mouse).